A 348-amino-acid polypeptide reads, in one-letter code: Bifunctional nitrilase/nitrile hydratase NIT4B (348 aa).

The region spanning 29 to 300 (VRATVVQAST…EALISADLDL (272 aa)) is the CN hydrolase domain. Glu69 acts as the Proton acceptor in catalysis. Lys156 functions as the Proton donor in the catalytic mechanism. Cys190 (nucleophile) is an active-site residue.

This sequence belongs to the carbon-nitrogen hydrolase superfamily. Nitrilase family. Expressed in roots, stems, cotyledons, leaves and flowers.

It carries out the reaction a nitrile + 2 H2O = a carboxylate + NH4(+). The enzyme catalyses 3-cyano-L-alanine + 2 H2O = L-aspartate + NH4(+). In terms of biological role, highly specific for beta-cyano-L-alanine (Ala(CN)). Low activity with 3-phenylpropionitrile (PPN). Not associated with auxin production but may be involved in cyanide detoxification. This chain is Bifunctional nitrilase/nitrile hydratase NIT4B (NIT4B), found in Nicotiana tabacum (Common tobacco).